The following is a 481-amino-acid chain: Ras-GEF domain-containing family member 1A (481 aa).

The N-terminal Ras-GEF domain maps to 41-170 (QDGHLISGSL…AIAQMTQSLL (130 aa)). Positions 214 to 461 (DPLVLAQQLT…FVASFESEGP (248 aa)) constitute a Ras-GEF domain.

In terms of tissue distribution, detected in brain and spinal cord. Highly expressed in a number of intrahepatic cholangiocarcinoma tissue biopsies.

In terms of biological role, guanine nucleotide exchange factor (GEF) with specificity for RAP2A, KRAS, HRAS, and NRAS (in vitro). Plays a role in cell migration. This is Ras-GEF domain-containing family member 1A (RASGEF1A) from Homo sapiens (Human).